A 490-amino-acid polypeptide reads, in one-letter code: Calcium-dependent protein kinase 12 (490 aa).

The region spanning 22 to 280 is the Protein kinase domain; that stretch reads YFLGQVLGQG…AHQVLCHPWI (259 aa). ATP contacts are provided by residues 28–36 and Lys51; that span reads LGQGQFGTT. Asp146 (proton acceptor) is an active-site residue. At Ser186 the chain carries Phosphoserine. The tract at residues 286-316 is autoinhibitory domain; that stretch reads APDKPLDCAVVSRLKKFSAMNKLKKMALRVI. EF-hand domains follow at residues 323–358, 359–394, 395–430, and 434–464; these read EEIGGLKELFKMIDTDKSGTITFEELKDSMRRVGSE, LMESEIQELLRAADVDESGTIDYGEFLAATIHLNKL, EREENLVAAFSFFDKDASGYITIEELQQAWKEFGIN, and LDEMIKDIDQDNDGQIDYGEFVAMMRKGNGT. Ca(2+)-binding residues include Asp336, Asp338, Ser340, Thr342, Glu347, Asp372, Asp374, Ser376, Thr378, Glu383, Asp408, Asp410, Ser412, Tyr414, Glu419, Asp442, Asp444, Asp446, Gln448, and Glu453.

It belongs to the protein kinase superfamily. Ser/Thr protein kinase family. CDPK subfamily. As to quaternary structure, interacts weakly with DI19. Ubiquitously expressed.

The catalysed reaction is L-seryl-[protein] + ATP = O-phospho-L-seryl-[protein] + ADP + H(+). It carries out the reaction L-threonyl-[protein] + ATP = O-phospho-L-threonyl-[protein] + ADP + H(+). With respect to regulation, activated by calcium. Autophosphorylation may play an important role in the regulation of the kinase activity. In terms of biological role, may play a role in signal transduction pathways that involve calcium as a second messenger. The chain is Calcium-dependent protein kinase 12 (CPK12) from Arabidopsis thaliana (Mouse-ear cress).